Here is a 98-residue protein sequence, read N- to C-terminus: MSIVYINIFLAFIMSLLGMLIYRSHLMSSLLCLEGMMLSLFVMITLIILNNHFTLASMTPIILLVFAACEAALGLSLLVMVSNTYGNDYVQNLNLLQC.

3 helical membrane passes run Met1–Ile21, Ser29–Leu49, and Ile61–Val81.

The protein belongs to the complex I subunit 4L family. In terms of assembly, core subunit of respiratory chain NADH dehydrogenase (Complex I) which is composed of 45 different subunits.

It is found in the mitochondrion inner membrane. It catalyses the reaction a ubiquinone + NADH + 5 H(+)(in) = a ubiquinol + NAD(+) + 4 H(+)(out). In terms of biological role, core subunit of the mitochondrial membrane respiratory chain NADH dehydrogenase (Complex I) which catalyzes electron transfer from NADH through the respiratory chain, using ubiquinone as an electron acceptor. Part of the enzyme membrane arm which is embedded in the lipid bilayer and involved in proton translocation. This Herpestes javanicus (Small Indian mongoose) protein is NADH-ubiquinone oxidoreductase chain 4L (MT-ND4L).